The following is a 583-amino-acid chain: Membrane protein insertase YidC (583 aa).

Residues 5 to 25 (SVTGLALIALIMIVWLQFMSP) traverse the membrane as a helical segment. The interval 28-50 (KSVQPDNRPKAQTTATVSQEKTE) is disordered. Residues 37–46 (KAQTTATVSQ) show a composition bias toward polar residues. Transmembrane regions (helical) follow at residues 341-361 (PFAE…ISNY), 362-382 (GLII…LSMA), 427-447 (LGGC…FYVF), 477-497 (IPVY…TVFI), and 515-535 (LYIF…GLGL).

This sequence belongs to the OXA1/ALB3/YidC family. Type 1 subfamily. In terms of assembly, interacts with the Sec translocase complex via SecD. Specifically interacts with transmembrane segments of nascent integral membrane proteins during membrane integration.

The protein localises to the cell inner membrane. Required for the insertion and/or proper folding and/or complex formation of integral membrane proteins into the membrane. Involved in integration of membrane proteins that insert both dependently and independently of the Sec translocase complex, as well as at least some lipoproteins. Aids folding of multispanning membrane proteins. In Chlorobium limicola (strain DSM 245 / NBRC 103803 / 6330), this protein is Membrane protein insertase YidC.